A 1027-amino-acid chain; its full sequence is Contactin-5 (1027 aa).

The signal sequence occupies residues 1–19 (MMWLSWKLFLFLSLIGCLS). Ig-like C2-type domains lie at 32-117 (PDDV…AVLQ), 123-209 (NFSG…RVLS), 227-307 (PKIE…RNVF), 317-401 (PQWV…AELK), 407-494 (PTFP…ASVS), and 498-593 (PTRI…TELL). Cys50 and Cys100 are joined by a disulfide. Asn65 and Asn123 each carry an N-linked (GlcNAc...) asparagine glycan. 2 disulfides stabilise this stretch: Cys144/Cys196 and Cys249/Cys296. N-linked (GlcNAc...) asparagine glycans are attached at residues Asn324, Asn376, and Asn467. 3 cysteine pairs are disulfide-bonded: Cys338–Cys385, Cys430–Cys478, and Cys520–Cys577. Fibronectin type-III domains are found at residues 600–698 (PPGV…TNEA), 703–800 (PPAN…SAEG), 805–899 (APID…TKKS), and 901–994 (PSQA…SYAG). N-linked (GlcNAc...) asparagine glycosylation is found at Asn706, Asn743, Asn858, and Asn929. Ser999 carries GPI-anchor amidated serine lipidation. Residues 1000 to 1027 (AQSTLHMFSTSSSSVTLLLVLMVPSTSW) constitute a propeptide, removed in mature form.

This sequence belongs to the immunoglobulin superfamily. Contactin family. Interacts with INgCAM/L1 and the tenascin-R TNP protein. Does not interacts with NrCAM. Expressed by subpopulations of Purkinje cells in the cerebellum. Also expressed by one type of Purkinje cell afferents, the climbing fibers.

The protein localises to the cell membrane. In terms of biological role, contactins mediate cell surface interactions during nervous system development. May contribute to the formation of somatotopic maps of cerebellar afferents during the development of the nervous system. The chain is Contactin-5 (CNTN5) from Gallus gallus (Chicken).